Here is a 67-residue protein sequence, read N- to C-terminus: Prokaryotic ubiquitin-like protein Pup (67 aa).

Low complexity predominate over residues 1 to 36; the sequence is MPQQFEQPQAQQAVTQEDDALATTQAATQTESTDQA. A disordered region spans residues 1–38; the sequence is MPQQFEQPQAQQAVTQEDDALATTQAATQTESTDQADV. An ARC ATPase binding region spans residues 23-61; it reads TTQAATQTESTDQADVLDDILDDIESTLETNAEEYVNSF. Glutamate 67 is covalently cross-linked (Isoglutamyl lysine isopeptide (Glu-Lys) (interchain with K-? in acceptor proteins)).

Belongs to the prokaryotic ubiquitin-like protein family. Strongly interacts with the proteasome-associated ATPase ARC through a hydrophobic interface; the interacting region of Pup lies in its C-terminal half. There is one Pup binding site per ARC hexamer ring.

The protein operates within protein degradation; proteasomal Pup-dependent pathway. Functionally, protein modifier that is covalently attached to lysine residues of substrate proteins, thereby targeting them for proteasomal degradation. The tagging system is termed pupylation. The chain is Prokaryotic ubiquitin-like protein Pup from Bifidobacterium longum subsp. infantis (strain ATCC 15697 / DSM 20088 / JCM 1222 / NCTC 11817 / S12).